The chain runs to 271 residues: MNRIQQTFAALAEQGRKGLIPFITAGDPDPAKTVEFMHALAEGGADVIELGVPFSDPMADGPVIQRSSERALARGVTLKSVLADVKRFRDTNQTTPVVLMGYANPIERMGVDAFATEAQAAGVDGVLVVDYPPEEAGVFAEKMRAAQIDPIFLLAPTSTDERIADVGKIASGYVYYVSLKGVTGAGNLDVSSIAGKIPAIKSRVPVPVGVGFGIRDAETARAVAEVSDAVVIGSRLVQLLESAAPEGAAAALKTFIAELRAALDGAGKTAR.

Residues Glu49 and Asp60 each act as proton acceptor in the active site.

Belongs to the TrpA family. As to quaternary structure, tetramer of two alpha and two beta chains.

The catalysed reaction is (1S,2R)-1-C-(indol-3-yl)glycerol 3-phosphate + L-serine = D-glyceraldehyde 3-phosphate + L-tryptophan + H2O. It functions in the pathway amino-acid biosynthesis; L-tryptophan biosynthesis; L-tryptophan from chorismate: step 5/5. Its function is as follows. The alpha subunit is responsible for the aldol cleavage of indoleglycerol phosphate to indole and glyceraldehyde 3-phosphate. This Burkholderia ambifaria (strain MC40-6) protein is Tryptophan synthase alpha chain.